Consider the following 369-residue polypeptide: 3-isopropylmalate dehydrogenase (369 aa).

Position 77 to 90 (77 to 90 (GPKYDVLDFSVKPE)) interacts with NAD(+). Substrate contacts are provided by arginine 97, arginine 107, arginine 135, and aspartate 226. Mg(2+)-binding residues include aspartate 226, aspartate 250, and aspartate 254. 289–301 (GSAPDIAGQGKAN) serves as a coordination point for NAD(+).

Belongs to the isocitrate and isopropylmalate dehydrogenases family. LeuB type 1 subfamily. As to quaternary structure, homodimer. The cofactor is Mg(2+). Requires Mn(2+) as cofactor.

The protein resides in the cytoplasm. The catalysed reaction is (2R,3S)-3-isopropylmalate + NAD(+) = 4-methyl-2-oxopentanoate + CO2 + NADH. It participates in amino-acid biosynthesis; L-leucine biosynthesis; L-leucine from 3-methyl-2-oxobutanoate: step 3/4. Catalyzes the oxidation of 3-carboxy-2-hydroxy-4-methylpentanoate (3-isopropylmalate) to 3-carboxy-4-methyl-2-oxopentanoate. The product decarboxylates to 4-methyl-2 oxopentanoate. The sequence is that of 3-isopropylmalate dehydrogenase from Cereibacter sphaeroides (strain ATCC 17023 / DSM 158 / JCM 6121 / CCUG 31486 / LMG 2827 / NBRC 12203 / NCIMB 8253 / ATH 2.4.1.) (Rhodobacter sphaeroides).